The chain runs to 100 residues: Secreted protein of Ly-6 domain 1 (100 aa).

The N-terminal stretch at 1 to 22 (MAKCLLLLLLVVLSSLLGLPQA) is a signal peptide. Positions 23 to 100 (LECFQCNRVN…CHDSPLCNKF (78 aa)) constitute a UPAR/Ly6 domain. 5 disulfide bridges follow: cysteine 25/cysteine 52, cysteine 28/cysteine 37, cysteine 44/cysteine 70, cysteine 74/cysteine 90, and cysteine 91/cysteine 97. Residue asparagine 60 is glycosylated (N-linked (GlcNAc...) asparagine).

In terms of processing, glycosylated. In terms of tissue distribution, expressed in placenta, where it is detected in both fetal tissues (cotyledon and intercotyledon) and maternal tissues (caruncle and intercaruncular endometrium) (at protein level). Expressed in the mesenchyme area of villi in the cotyledon (at protein level). In endometrium, expressed in the luminal epithelium and weakly in the subluminal stroma (at protein level). Detected in trophoblast mononucleate cells (TMCs) (at protein level). Also detected in trophoblast binucleate cells (BNCs). Overall, expression is strongest in fetal tissue and lower in maternal tissue. Not detected in other tissues tested.

It localises to the secreted. In terms of biological role, binds specifically to type I collagen. This is Secreted protein of Ly-6 domain 1 from Bos taurus (Bovine).